The sequence spans 297 residues: Glycosylphosphatidylinositol anchor biosynthesis protein 11 (297 aa).

A compositionally biased stretch (low complexity) spans 1-18; sequence MTSASPSPLRAANAASSA. The segment at 1–26 is disordered; sequence MTSASPSPLRAANAASSAPVPPPAMK. A run of 2 helical transmembrane segments spans residues 44–64 and 76–96; these read SFVH…ALVA and FLAL…GSVL. A disordered region spans residues 97–140; it reads PSPPASPVSDGDEKEKEKEKEKEKEKEKRKLPLRAGKLPRKKNQ. The span at 107–126 shows a compositional bias: basic and acidic residues; sequence GDEKEKEKEKEKEKEKEKRK. The span at 127–140 shows a compositional bias: basic residues; that stretch reads LPLRAGKLPRKKNQ. Asn139 carries an N-linked (GlcNAc...) asparagine glycan. 4 helical membrane passes run 157 to 177, 187 to 207, 225 to 245, and 253 to 273; these read LILT…LFGA, VLCA…VHGV, VWGG…PIPL, and AFPI…SVVC.

This sequence belongs to the PIGF family.

The protein localises to the endoplasmic reticulum membrane. It participates in glycolipid biosynthesis; glycosylphosphatidylinositol-anchor biosynthesis. Functionally, acts in the GPI biosynthetic pathway between GlcNAc-PI synthesis and GPI transfer to protein. This Aspergillus fumigatus (strain ATCC MYA-4609 / CBS 101355 / FGSC A1100 / Af293) (Neosartorya fumigata) protein is Glycosylphosphatidylinositol anchor biosynthesis protein 11 (gpi11).